The chain runs to 443 residues: Probable glycine dehydrogenase (decarboxylating) subunit 1 (443 aa).

The protein belongs to the GcvP family. N-terminal subunit subfamily. In terms of assembly, the glycine cleavage system is composed of four proteins: P, T, L and H. In this organism, the P 'protein' is a heterodimer of two subunits.

The enzyme catalyses N(6)-[(R)-lipoyl]-L-lysyl-[glycine-cleavage complex H protein] + glycine + H(+) = N(6)-[(R)-S(8)-aminomethyldihydrolipoyl]-L-lysyl-[glycine-cleavage complex H protein] + CO2. In terms of biological role, the glycine cleavage system catalyzes the degradation of glycine. The P protein binds the alpha-amino group of glycine through its pyridoxal phosphate cofactor; CO(2) is released and the remaining methylamine moiety is then transferred to the lipoamide cofactor of the H protein. The sequence is that of Probable glycine dehydrogenase (decarboxylating) subunit 1 from Chlorobium limicola (strain DSM 245 / NBRC 103803 / 6330).